A 509-amino-acid chain; its full sequence is GMP synthase [glutamine-hydrolyzing] (509 aa).

Residues 4-193 (NVLILDFGSQ…LIKIAGTKAT (190 aa)) form the Glutamine amidotransferase type-1 domain. The active-site Nucleophile is the Cys79. Residues His167 and Glu169 contribute to the active site. The 191-residue stretch at 194–384 (WTPGKFVDLT…LGIDKELLGR (191 aa)) folds into the GMPS ATP-PPase domain. An ATP-binding site is contributed by 221 to 227 (SGGVDST).

As to quaternary structure, homodimer.

It catalyses the reaction XMP + L-glutamine + ATP + H2O = GMP + L-glutamate + AMP + diphosphate + 2 H(+). It functions in the pathway purine metabolism; GMP biosynthesis; GMP from XMP (L-Gln route): step 1/1. Its function is as follows. Catalyzes the synthesis of GMP from XMP. The chain is GMP synthase [glutamine-hydrolyzing] from Christiangramia forsetii (strain DSM 17595 / CGMCC 1.15422 / KT0803) (Gramella forsetii).